A 279-amino-acid polypeptide reads, in one-letter code: Tryptophan synthase alpha chain (279 aa).

Active-site proton acceptor residues include E50 and D61.

Belongs to the TrpA family. As to quaternary structure, tetramer of two alpha and two beta chains.

It carries out the reaction (1S,2R)-1-C-(indol-3-yl)glycerol 3-phosphate + L-serine = D-glyceraldehyde 3-phosphate + L-tryptophan + H2O. It functions in the pathway amino-acid biosynthesis; L-tryptophan biosynthesis; L-tryptophan from chorismate: step 5/5. The alpha subunit is responsible for the aldol cleavage of indoleglycerol phosphate to indole and glyceraldehyde 3-phosphate. This is Tryptophan synthase alpha chain from Methylobacterium radiotolerans (strain ATCC 27329 / DSM 1819 / JCM 2831 / NBRC 15690 / NCIMB 10815 / 0-1).